Reading from the N-terminus, the 499-residue chain is Glutamyl-tRNA(Gln) amidotransferase subunit A (499 aa).

Catalysis depends on charge relay system residues lysine 79 and serine 159. The active-site Acyl-ester intermediate is the serine 183.

It belongs to the amidase family. GatA subfamily. Heterotrimer of A, B and C subunits.

It carries out the reaction L-glutamyl-tRNA(Gln) + L-glutamine + ATP + H2O = L-glutaminyl-tRNA(Gln) + L-glutamate + ADP + phosphate + H(+). Functionally, allows the formation of correctly charged Gln-tRNA(Gln) through the transamidation of misacylated Glu-tRNA(Gln) in organisms which lack glutaminyl-tRNA synthetase. The reaction takes place in the presence of glutamine and ATP through an activated gamma-phospho-Glu-tRNA(Gln). The polypeptide is Glutamyl-tRNA(Gln) amidotransferase subunit A (Granulibacter bethesdensis (strain ATCC BAA-1260 / CGDNIH1)).